The sequence spans 246 residues: Agamous-like MADS-box protein AGL5 (246 aa).

The 55-residue stretch at 18-72 (RGKIEIKRIENTTNRQVTFCKRRNGLLKKAYELSVLCDAEVALVIFSTRGRLYEY) folds into the MADS-box domain. One can recognise a K-box domain in the interval 102–192 (TQYYQQEASK…RSKITERTGL (91 aa)).

In terms of assembly, interacts with AGL15 and AGL16.

The protein localises to the nucleus. Probable transcription factor. Interacts genetically with TT16/AGL32 in a partially antagonistic manner during flower development. Is essential for the coordination of cell divisions in ovule, seed coat development and endosperm formation. This Arabidopsis thaliana (Mouse-ear cress) protein is Agamous-like MADS-box protein AGL5 (AGL5).